We begin with the raw amino-acid sequence, 136 residues long: DUF35 domain-containing scaffold protein (136 aa).

Zn(2+) contacts are provided by cysteine 25, cysteine 38, and cysteine 41.

Belongs to the scaffold protein DUF35 family. As to quaternary structure, interacts with acetoacetyl-CoA thiolase and HMG-CoA synthase (HMGCS) that catalyzes the first and second step in the mevalonate pathway, respectively.

Functionally, functions as a scaffold to connect the acetoacetyl-CoA thiolase and HMG-CoA synthase (HMGCS) dimers in the channeling thiolase/HMGCS complex, which allows for efficient coupling of the endergonic thiolase reaction with the exergonic HMGCS reaction. This is DUF35 domain-containing scaffold protein from Pyrococcus furiosus (strain ATCC 43587 / DSM 3638 / JCM 8422 / Vc1).